The following is a 471-amino-acid chain: GDP-fucose protein O-fucosyltransferase 3 (471 aa).

Residues 1-8 (MNRMWEKK) lie on the Cytoplasmic side of the membrane. The chain crosses the membrane as a helical; Signal-anchor for type II membrane protein span at residues 9-29 (FWISCFFIILFFILVTLQVMV). Topologically, residues 30–471 (ELGRFEKRET…EFWNLVFKFQ (442 aa)) are lumenal. N-linked (GlcNAc...) asparagine glycosylation is found at N102, N122, N160, and N310. The cysteines at positions 381 and 384 are disulfide-linked. N457 carries N-linked (GlcNAc...) asparagine glycosylation.

Belongs to the glycosyltransferase 10 family.

It localises to the endoplasmic reticulum membrane. It catalyses the reaction L-threonyl-[protein] + GDP-beta-L-fucose = 3-O-(alpha-L-fucosyl)-L-threonyl-[protein] + GDP + H(+). The catalysed reaction is L-seryl-[protein] + GDP-beta-L-fucose = 3-O-(alpha-L-fucosyl)-L-seryl-[protein] + GDP + H(+). It participates in protein modification; protein glycosylation. Protein O-fucosyltransferase that specifically catalyzes O-fucosylation of serine or threonine residues in EMI domains of target proteins. Attaches fucose through an O-glycosidic linkage. O-fucosylation of EMI domain-containing proteins may be required for facilitating protein folding and secretion. This chain is GDP-fucose protein O-fucosyltransferase 3 (fut10), found in Xenopus tropicalis (Western clawed frog).